The following is a 245-amino-acid chain: 1-(5-phosphoribosyl)-5-[(5-phosphoribosylamino)methylideneamino] imidazole-4-carboxamide isomerase (245 aa).

Residue Asp-7 is the Proton acceptor of the active site. Residue Asp-129 is the Proton donor of the active site.

This sequence belongs to the HisA/HisF family.

The protein resides in the cytoplasm. The enzyme catalyses 1-(5-phospho-beta-D-ribosyl)-5-[(5-phospho-beta-D-ribosylamino)methylideneamino]imidazole-4-carboxamide = 5-[(5-phospho-1-deoxy-D-ribulos-1-ylimino)methylamino]-1-(5-phospho-beta-D-ribosyl)imidazole-4-carboxamide. It participates in amino-acid biosynthesis; L-histidine biosynthesis; L-histidine from 5-phospho-alpha-D-ribose 1-diphosphate: step 4/9. The protein is 1-(5-phosphoribosyl)-5-[(5-phosphoribosylamino)methylideneamino] imidazole-4-carboxamide isomerase of Shewanella loihica (strain ATCC BAA-1088 / PV-4).